The following is a 114-amino-acid chain: Class I hydrophobin 1 (114 aa).

The first 20 residues, 1-20 (MQFTKMSAFATLALATLAAA), serve as a signal peptide directing secretion. Disulfide bonds link Cys-33–Cys-93, Cys-40–Cys-87, Cys-41–Cys-74, and Cys-94–Cys-107.

Belongs to the fungal hydrophobin family. Self-assembles to form functional amyloid fibrils called rodlets. Self-assembly into fibrillar rodlets occurs spontaneously at hydrophobic:hydrophilic interfaces and the rodlets further associate laterally to form amphipathic monolayers.

Its subcellular location is the secreted. It localises to the cell wall. Functionally, aerial growth, conidiation, and dispersal of filamentous fungi in the environment rely upon a capability of their secreting small amphipathic proteins called hydrophobins (HPBs) with low sequence identity. Class I can self-assemble into an outermost layer of rodlet bundles on aerial cell surfaces, conferring cellular hydrophobicity that supports fungal growth, development and dispersal; whereas Class II form highly ordered films at water-air interfaces through intermolecular interactions but contribute nothing to the rodlet structure. Pnh1 is a class I hydrophobin that might be involved in the attachment of the hydrophilic wall of hyphae to the hydrophobic surface of wood under inorganic phosphate (Pi)-deficient conditions and enable the mycelium to degrade efficiently the components of wood and to acquire nutrients containing Pi. The chain is Class I hydrophobin 1 from Pholiota nameko.